The chain runs to 192 residues: ATP synthase protein MI25 (192 aa).

Residues 29-49 form a helical membrane-spanning segment; sequence ISIYNEEMIVARCFIGFLIFS.

It belongs to the ATPase protein MI25 family. In terms of assembly, F-type ATPases have 2 components, CF(1) - the catalytic core - and CF(0) - the membrane proton channel. CF(1) has five subunits: alpha(3), beta(3), gamma(1), delta(1), epsilon(1). CF(0) has three main subunits: a, b and c.

It is found in the mitochondrion membrane. This is one of the chains of the nonenzymatic component (CF(0) subunit) of the mitochondrial ATPase complex. This is ATP synthase protein MI25 from Triticum timopheevii (Timopheev's wheat).